The following is a 119-amino-acid chain: Large ribosomal subunit protein bL19 (119 aa).

The protein belongs to the bacterial ribosomal protein bL19 family.

Its function is as follows. This protein is located at the 30S-50S ribosomal subunit interface and may play a role in the structure and function of the aminoacyl-tRNA binding site. The chain is Large ribosomal subunit protein bL19 from Sulfurovum sp. (strain NBC37-1).